A 384-amino-acid polypeptide reads, in one-letter code: MSEYSIFTSESVSEGHPDKMADQISDAVLDAILKDDKHARVAVETLVKTGMAIVAGEVRTSTYVDLEDLIRQVILDIGYNSSDVGFDGASCAVINAIGKQSADIAMGVDEAENKDMGAGDQGLMFGYATNETDVLMPAPIYYSHRLVEKQAELRKSGAHAWSRPDAKSQVTLRYENGKPVAVDAVVLSTQHAPGVSQAQIHEAVMEEIIKPVLPAEWLHSNTKYHINPTGQFIIGGPVGDCGLTGRKIIVDTYGGMARHGGGAFSGKDPSKVDRSAAYAGRYVAKNIVAAGLADRCEIQVSYAIGVAEPTSISVNTFGTGKIDDGKIVELVKEHFDLRPRGLIEMLDLMRPIYRKTAAYGHFGRELPEFTWEITDKADVLKAAL.

Position 16 (His16) interacts with ATP. Asp18 is a binding site for Mg(2+). Position 44 (Glu44) interacts with K(+). L-methionine contacts are provided by Glu57 and Gln100. Residues 100 to 110 (QSADIAMGVDE) form a flexible loop region. Residues 165 to 167 (DAK), Asp240, 246 to 247 (RK), Ala263, and Lys267 contribute to the ATP site. Residue Asp240 coordinates L-methionine. Lys271 is an L-methionine binding site.

This sequence belongs to the AdoMet synthase family. Homotetramer; dimer of dimers. Requires Mg(2+) as cofactor. The cofactor is K(+).

Its subcellular location is the cytoplasm. It catalyses the reaction L-methionine + ATP + H2O = S-adenosyl-L-methionine + phosphate + diphosphate. It functions in the pathway amino-acid biosynthesis; S-adenosyl-L-methionine biosynthesis; S-adenosyl-L-methionine from L-methionine: step 1/1. In terms of biological role, catalyzes the formation of S-adenosylmethionine (AdoMet) from methionine and ATP. The overall synthetic reaction is composed of two sequential steps, AdoMet formation and the subsequent tripolyphosphate hydrolysis which occurs prior to release of AdoMet from the enzyme. In Teredinibacter turnerae (strain ATCC 39867 / T7901), this protein is S-adenosylmethionine synthase.